A 196-amino-acid chain; its full sequence is Lipoprotein signal peptidase (196 aa).

Transmembrane regions (helical) follow at residues 17-37 (SIII…IDNL), 73-93 (SNAI…YLMI), and 96-116 (NTIG…GNLI). Catalysis depends on residues aspartate 126 and aspartate 144. Residues 135 to 155 (YSFPVFNLADCFITIGVIILI) form a helical membrane-spanning segment.

Belongs to the peptidase A8 family.

It localises to the cell inner membrane. It catalyses the reaction Release of signal peptides from bacterial membrane prolipoproteins. Hydrolyzes -Xaa-Yaa-Zaa-|-(S,diacylglyceryl)Cys-, in which Xaa is hydrophobic (preferably Leu), and Yaa (Ala or Ser) and Zaa (Gly or Ala) have small, neutral side chains.. The protein operates within protein modification; lipoprotein biosynthesis (signal peptide cleavage). In terms of biological role, this protein specifically catalyzes the removal of signal peptides from prolipoproteins. This Rickettsia akari (strain Hartford) protein is Lipoprotein signal peptidase.